Reading from the N-terminus, the 273-residue chain is Putative pyruvate, phosphate dikinase regulatory protein (273 aa).

153-160 is a binding site for ADP; that stretch reads GISRTSKT.

The protein belongs to the pyruvate, phosphate/water dikinase regulatory protein family. PDRP subfamily.

It carries out the reaction N(tele)-phospho-L-histidyl/L-threonyl-[pyruvate, phosphate dikinase] + ADP = N(tele)-phospho-L-histidyl/O-phospho-L-threonyl-[pyruvate, phosphate dikinase] + AMP + H(+). It catalyses the reaction N(tele)-phospho-L-histidyl/O-phospho-L-threonyl-[pyruvate, phosphate dikinase] + phosphate + H(+) = N(tele)-phospho-L-histidyl/L-threonyl-[pyruvate, phosphate dikinase] + diphosphate. Bifunctional serine/threonine kinase and phosphorylase involved in the regulation of the pyruvate, phosphate dikinase (PPDK) by catalyzing its phosphorylation/dephosphorylation. The chain is Putative pyruvate, phosphate dikinase regulatory protein from Rhizobium etli (strain CIAT 652).